The sequence spans 155 residues: dCTP deaminase (155 aa).

Residues 79-84 (RSSLAR), D95, Q124, and Y138 contribute to the dCTP site.

The protein belongs to the dCTP deaminase family. In terms of assembly, homotrimer.

The catalysed reaction is dCTP + H2O + H(+) = dUTP + NH4(+). Its pathway is pyrimidine metabolism; dUMP biosynthesis; dUMP from dCTP (dUTP route): step 1/2. In terms of biological role, catalyzes the deamination of dCTP to dUTP. This is dCTP deaminase from Thermococcus kodakarensis (strain ATCC BAA-918 / JCM 12380 / KOD1) (Pyrococcus kodakaraensis (strain KOD1)).